Consider the following 558-residue polypeptide: Putative F-box/LRR-repeat protein R542 (558 aa).

The F-box domain maps to 1–47; sequence MLLNLPYEILLIIFSLIESKKFFKLLSINKEVREFILTMLNQNPKSF. LRR repeat units lie at residues 73–105, 139–176, 177–220, 251–284, 285–317, 329–361, 369–395, 420–444, 445–477, and 481–508; these read KSTI…GLSF, CGKI…NLQC, CMRI…KIDG, LDKL…DLSG, CINL…GLSY, CFRI…GFFY, VVGY…TISD, CNNI…DLRY, CNNI…GISY, and SKKI…VFKT.

This is Putative F-box/LRR-repeat protein R542 from Acanthamoeba polyphaga mimivirus (APMV).